A 46-amino-acid polypeptide reads, in one-letter code: Defensin-like protein AX2 (46 aa).

Cystine bridges form between Cys3-Cys46, Cys14-Cys34, Cys20-Cys40, and Cys24-Cys42.

As to expression, leaves and flowers.

Its function is as follows. Strong inhibiting activity against C.beticola and other filamentous fungi. Little or no effect against bacteria. This chain is Defensin-like protein AX2, found in Beta vulgaris (Sugar beet).